A 234-amino-acid polypeptide reads, in one-letter code: Large ribosomal subunit protein uL3 (234 aa).

The interval Ala-137–Thr-156 is disordered.

The protein belongs to the universal ribosomal protein uL3 family. In terms of assembly, part of the 50S ribosomal subunit. Forms a cluster with proteins L14 and L19.

Its function is as follows. One of the primary rRNA binding proteins, it binds directly near the 3'-end of the 23S rRNA, where it nucleates assembly of the 50S subunit. In Frankia alni (strain DSM 45986 / CECT 9034 / ACN14a), this protein is Large ribosomal subunit protein uL3.